We begin with the raw amino-acid sequence, 351 residues long: Ferrochelatase (351 aa).

Residues H184 and E265 each contribute to the Fe cation site.

Belongs to the ferrochelatase family.

It is found in the cytoplasm. It carries out the reaction heme b + 2 H(+) = protoporphyrin IX + Fe(2+). It participates in porphyrin-containing compound metabolism; protoheme biosynthesis; protoheme from protoporphyrin-IX: step 1/1. Catalyzes the ferrous insertion into protoporphyrin IX. This is Ferrochelatase from Rhodopirellula baltica (strain DSM 10527 / NCIMB 13988 / SH1).